A 483-amino-acid polypeptide reads, in one-letter code: FK506-binding protein 4 (483 aa).

Disordered regions lie at residues 41-171 (TAEP…EEFV) and 208-371 (TGNY…LKKP). The span at 68–93 (EEDDDEYLDIDGEDSEDDEESDDEEV) shows a compositional bias: acidic residues. Basic and acidic residues-rich tracts occupy residues 108-121 (REAA…ATKE) and 130-150 (ADAK…KASE). 3 stretches are compositionally biased toward acidic residues: residues 151–167 (SDDE…EPNF), 216–233 (GQDE…DEEY), and 241–256 (LESD…DEID). Composition is skewed to basic and acidic residues over residues 298-309 (LVAKDKKQAEKQ), 323-344 (ENKD…KDLE), and 351-370 (AKDK…DLKK). Residues 397–483 (GDRVSLRYIG…VFDIKLLEIK (87 aa)) enclose the PPIase FKBP-type domain.

Belongs to the FKBP-type PPIase family. FKBP3/4 subfamily. Binds to histones H3 and H4.

It is found in the nucleus. It carries out the reaction [protein]-peptidylproline (omega=180) = [protein]-peptidylproline (omega=0). In terms of biological role, PPIase that acts as a histone chaperone. Histone proline isomerase that increases the rate of cis-trans isomerization at prolines on the histone H3 N-terminal tail. Proline isomerization influences H3 methylation thereby regulating gene expression. The chain is FK506-binding protein 4 (FPR4) from Chaetomium thermophilum (strain DSM 1495 / CBS 144.50 / IMI 039719) (Thermochaetoides thermophila).